A 314-amino-acid chain; its full sequence is Dihydroorotate dehydrogenase (fumarate) (314 aa).

Substrate-binding positions include Lys46, Asn70–Leu74, and Asn130. FMN is bound at residue Lys46–Ser47. An FMN-binding site is contributed by Asn130. Catalysis depends on nucleophile residues Ser132 and Cys133. 2 residues coordinate FMN: Lys167 and Ile195. Asn196–Ser197 is a binding site for substrate. FMN contacts are provided by residues Gly224, Gly252–Gly253, and Gly274–Thr275.

This sequence belongs to the dihydroorotate dehydrogenase family. Type 1 subfamily. Homodimer. The cofactor is FMN.

Its subcellular location is the cytoplasm. It carries out the reaction (S)-dihydroorotate + fumarate = orotate + succinate. It functions in the pathway pyrimidine metabolism; UMP biosynthesis via de novo pathway. In terms of biological role, catalyzes the conversion of dihydroorotate to orotate with fumarate as the electron acceptor. This is Dihydroorotate dehydrogenase (fumarate) (URA1) from Saccharomyces paradoxus (Yeast).